The sequence spans 520 residues: MNTTISNQTPHIRIFDTTLRDGEQSPGCSMTPQQKLVMARALDALGVDIIETGFPASSHSDREAVAMMGRELRRPTLAVLSRCLQADIETSARALETVANPRLHVFLSTSPLHREHKLRMSREQVLESVHRHVTLARGYIDDVEFSAEDATRTEEDFLAEVTRVAVAAGATTINLPDTVGFTTPEEIRGMFSRLIASVEGADKVIFSAHCHNDLGLAVANSLAAIEGGARQVECTINGIGERAGNCALEEITMALKVRGAFYNIDSAINTPRIVSTSQLLQRLVGMPVQRNKAVVGGNAFAHESGIHQHGMLRHRGTYEIMRPEDVGWESSQMVLGRHSGRAAVERRLRALGYLLEEEEVKLMFEQFKALCEKQRLVTDADLQALMQDATVQEGYRLASMTISDVGSRANALVELSDPEGNRVAETAQGNGPVDALFGALASATGVKLELDSYQVHSVGIGADARGEASLSVRHDGVEYEGTGTSKDIIEASALAWLDVANRLLRQRERGVIAGKTAAVA.

The region spanning 12–274 (IRIFDTTLRD…DSAINTPRIV (263 aa)) is the Pyruvate carboxyltransferase domain. Mn(2+) is bound by residues Asp21, His209, His211, and Asn245. Residues 396 to 520 (RLASMTISDV…VIAGKTAAVA (125 aa)) form a regulatory domain region.

It belongs to the alpha-IPM synthase/homocitrate synthase family. LeuA type 1 subfamily. Homodimer. Mn(2+) is required as a cofactor.

It localises to the cytoplasm. The enzyme catalyses 3-methyl-2-oxobutanoate + acetyl-CoA + H2O = (2S)-2-isopropylmalate + CoA + H(+). It participates in amino-acid biosynthesis; L-leucine biosynthesis; L-leucine from 3-methyl-2-oxobutanoate: step 1/4. In terms of biological role, catalyzes the condensation of the acetyl group of acetyl-CoA with 3-methyl-2-oxobutanoate (2-ketoisovalerate) to form 3-carboxy-3-hydroxy-4-methylpentanoate (2-isopropylmalate). In Xanthomonas oryzae pv. oryzae (strain KACC10331 / KXO85), this protein is 2-isopropylmalate synthase.